Consider the following 728-residue polypeptide: Elongation factor 2 (728 aa).

One can recognise a tr-type G domain in the interval 19–261 (EHIRNIAIAA…MVCEHFPNPV (243 aa)). Residues 28–35 (AHVDHGKT), 94–98 (DTPGH), and 148–151 (NKVD) contribute to the GTP site. His-596 is modified (diphthamide).

This sequence belongs to the TRAFAC class translation factor GTPase superfamily. Classic translation factor GTPase family. EF-G/EF-2 subfamily.

It localises to the cytoplasm. In terms of biological role, catalyzes the GTP-dependent ribosomal translocation step during translation elongation. During this step, the ribosome changes from the pre-translocational (PRE) to the post-translocational (POST) state as the newly formed A-site-bound peptidyl-tRNA and P-site-bound deacylated tRNA move to the P and E sites, respectively. Catalyzes the coordinated movement of the two tRNA molecules, the mRNA and conformational changes in the ribosome. In Haloarcula marismortui (strain ATCC 43049 / DSM 3752 / JCM 8966 / VKM B-1809) (Halobacterium marismortui), this protein is Elongation factor 2.